A 263-amino-acid polypeptide reads, in one-letter code: 3-methyl-2-oxobutanoate hydroxymethyltransferase (263 aa).

Residues aspartate 44 and aspartate 83 each coordinate Mg(2+). Residues 44 to 45, aspartate 83, and lysine 113 contribute to the 3-methyl-2-oxobutanoate site; that span reads DS. Glutamate 115 is a Mg(2+) binding site. The Proton acceptor role is filled by glutamate 183.

This sequence belongs to the PanB family. As to quaternary structure, homodecamer; pentamer of dimers. Mg(2+) serves as cofactor.

The protein resides in the cytoplasm. The catalysed reaction is 3-methyl-2-oxobutanoate + (6R)-5,10-methylene-5,6,7,8-tetrahydrofolate + H2O = 2-dehydropantoate + (6S)-5,6,7,8-tetrahydrofolate. It functions in the pathway cofactor biosynthesis; (R)-pantothenate biosynthesis; (R)-pantoate from 3-methyl-2-oxobutanoate: step 1/2. Functionally, catalyzes the reversible reaction in which hydroxymethyl group from 5,10-methylenetetrahydrofolate is transferred onto alpha-ketoisovalerate to form ketopantoate. This is 3-methyl-2-oxobutanoate hydroxymethyltransferase from Trichodesmium erythraeum (strain IMS101).